A 493-amino-acid chain; its full sequence is Glutamyl-tRNA(Gln) amidotransferase subunit A (493 aa).

Active-site charge relay system residues include lysine 79 and serine 159. The active-site Acyl-ester intermediate is serine 183.

This sequence belongs to the amidase family. GatA subfamily. Heterotrimer of A, B and C subunits.

The catalysed reaction is L-glutamyl-tRNA(Gln) + L-glutamine + ATP + H2O = L-glutaminyl-tRNA(Gln) + L-glutamate + ADP + phosphate + H(+). Its function is as follows. Allows the formation of correctly charged Gln-tRNA(Gln) through the transamidation of misacylated Glu-tRNA(Gln) in organisms which lack glutaminyl-tRNA synthetase. The reaction takes place in the presence of glutamine and ATP through an activated gamma-phospho-Glu-tRNA(Gln). The sequence is that of Glutamyl-tRNA(Gln) amidotransferase subunit A from Chelativorans sp. (strain BNC1).